A 349-amino-acid polypeptide reads, in one-letter code: tRNA pseudouridine synthase D (349 aa).

F26 lines the substrate pocket. D79 serves as the catalytic Nucleophile. Residue N128 coordinates substrate. Residues 154–302 form the TRUD domain; sequence GVPNYFGSQR…VEGSRRAVLL (149 aa). F328 serves as a coordination point for substrate.

This sequence belongs to the pseudouridine synthase TruD family.

It catalyses the reaction uridine(13) in tRNA = pseudouridine(13) in tRNA. Its function is as follows. Responsible for synthesis of pseudouridine from uracil-13 in transfer RNAs. This is tRNA pseudouridine synthase D from Yersinia pestis bv. Antiqua (strain Antiqua).